The sequence spans 382 residues: S-adenosylmethionine synthase (382 aa).

Histidine 16 serves as a coordination point for ATP. Residue aspartate 18 participates in Mg(2+) binding. Glutamate 44 is a binding site for K(+). L-methionine contacts are provided by glutamate 57 and glutamine 100. Residues 100 to 110 (QSADIAIGVDE) are flexible loop. ATP is bound by residues 165–167 (DAK), aspartate 240, 246–247 (RK), alanine 263, and lysine 267. Aspartate 240 lines the L-methionine pocket. Lysine 271 lines the L-methionine pocket.

It belongs to the AdoMet synthase family. In terms of assembly, homotetramer; dimer of dimers. Requires Mg(2+) as cofactor. The cofactor is K(+).

Its subcellular location is the cytoplasm. The catalysed reaction is L-methionine + ATP + H2O = S-adenosyl-L-methionine + phosphate + diphosphate. The protein operates within amino-acid biosynthesis; S-adenosyl-L-methionine biosynthesis; S-adenosyl-L-methionine from L-methionine: step 1/1. Functionally, catalyzes the formation of S-adenosylmethionine (AdoMet) from methionine and ATP. The overall synthetic reaction is composed of two sequential steps, AdoMet formation and the subsequent tripolyphosphate hydrolysis which occurs prior to release of AdoMet from the enzyme. The chain is S-adenosylmethionine synthase from Alcanivorax borkumensis (strain ATCC 700651 / DSM 11573 / NCIMB 13689 / SK2).